The sequence spans 312 residues: NADPH-dependent alpha-keto amide reductase (312 aa).

NADPH is bound by residues Gly25, Thr26, Arg27, and Asp59. Residues Tyr64 and His122 each act as proton donor in the active site. A Phosphoserine modification is found at Ser123. The NADPH site is built by Ser157, Gln179, Ser208, Leu210, Thr257, Thr258, Ser259, Ser260, Lys261, and Arg264.

This sequence belongs to the aldo/keto reductase family. In terms of assembly, monomer. In terms of processing, the N-terminus is blocked.

The protein resides in the cytoplasm. It localises to the nucleus. Reduces aromatic alpha-keto amides, aliphatic and aromatic alpha-keto esters, but not beta-keto esters. The polypeptide is NADPH-dependent alpha-keto amide reductase (Saccharomyces cerevisiae (strain ATCC 204508 / S288c) (Baker's yeast)).